Consider the following 652-residue polypeptide: MVRGPAGAWAVLGPLLWGCGLALLQGGMLYPQESRSRERKELNGLWSFRADFSDNRRQGFEQQWYRKPLRESGPTLDMPVPSSFNDISQDGRLRSFIGWVWYEREAILPQRWTQDLGTRVVLRISSAHYYAIVWVNGVHVTEHEGGHLPFEADISKLVQTGPLSSCRITIAINNTLSPHTLPPGTILYKTDTSKYPKGYFVQNTNFDFFNYAGLHRPVLLYTTPTAYIDDITVTTDVDQDTGLVNYQIFVQGSDHFQLEVHLLDEEGRVVAKGTGGQGQLQVPSAHLWWPYLMHERPAYLYSLEVKLTAQTSAGPLSDFYTLPVGIRTVAVTERQFLINGKPFYFHGVNKHEDADIRGKGFDWSLLVKDFNLLRWLGANAFRTSHYPYAEEVMQLCDRYGIVVIDESPGVGIVLAQSFSNASLQHHLEVMEEMVRRDKNHPAVVMWSVANEPSSFLEQAAYYFKMLIGHTKALDPSRPVTFVTSSSYEKDLGVPYVDVICVNSYYSWYHDYGHMEVIQLQLATQFERWHEAYQKPIIQSEYGAETIIGFHEDPPLMFSEEYQKGLLQQYHVILDQKRKEYVVGELIWNFADFMTDQSPQRAIGNRKGIFTRQRQPKSAAFLLRERYWKLANETRYLQSAVMSQCVGNSPFTV.

Residues 1–22 form the signal peptide; it reads MVRGPAGAWAVLGPLLWGCGLA. Residues N173 and N420 are each glycosylated (N-linked (GlcNAc...) asparagine). The active-site Proton donor is E451. An N-linked (GlcNAc...) asparagine glycan is attached at N631.

The protein belongs to the glycosyl hydrolase 2 family. Homotetramer.

The protein localises to the lysosome. It catalyses the reaction a beta-D-glucuronoside + H2O = D-glucuronate + an alcohol. With respect to regulation, inhibited by L-aspartic acid. Its function is as follows. Plays an important role in the degradation of dermatan and keratan sulfates. The chain is Beta-glucuronidase (GUSB) from Sus scrofa (Pig).